The primary structure comprises 155 residues: Short-chain-enoyl-CoA hydratase (155 aa).

The protein belongs to the enoyl-CoA hydratase/isomerase family.

It carries out the reaction a short-chain (3S)-3-hydroxyacyl-CoA = a short-chain (2E)-enoyl-CoA + H2O. It participates in lipid metabolism; butanoate metabolism. The protein is Short-chain-enoyl-CoA hydratase (crt) of Clostridioides difficile (Peptoclostridium difficile).